A 61-amino-acid polypeptide reads, in one-letter code: Adipokinetic prohormone type 2 (61 aa).

An N-terminal signal peptide occupies residues 1–22; sequence MRQGCALTLMLLVVVCAALSAA. Q23 is subject to Pyrrolidone carboxylic acid. W30 is subject to Tryptophan amide.

Belongs to the AKH/HRTH/RPCH family. As to quaternary structure, adipokinetic hormone precursor-related peptide (APRP) can form three type of disulfide-bond dimers: p1 (alpha-alpha), p2 (alpha-beta), and p3 (beta-beta).

The protein localises to the secreted. In terms of biological role, this hormone, released from cells in the corpora cardiaca, causes release of diglycerides from the fat body and stimulation of muscles to use these diglycerides as an energy source during energy-demanding processes. The protein is Adipokinetic prohormone type 2 of Schistocerca nitens (Vagrant locust).